A 448-amino-acid polypeptide reads, in one-letter code: Protein king tubby (448 aa).

A disordered region spans residues 103–195 (HELEDEESSP…NGTGGESEGD (93 aa)). Low complexity predominate over residues 118 to 133 (QHQQSASHSANSTQSQ). Serine 141 is subject to Phosphoserine. A compositionally biased stretch (gly residues) spans 182–191 (NGTGNGTGGE).

This sequence belongs to the TUB family.

Its subcellular location is the cytoplasm. The protein resides in the nucleus. It localises to the cell projection. It is found in the cilium membrane. The protein localises to the rhabdomere. The protein is Protein king tubby of Drosophila erecta (Fruit fly).